Here is a 507-residue protein sequence, read N- to C-terminus: 2,3-bisphosphoglycerate-independent phosphoglycerate mutase (507 aa).

Positions 11 and 61 each coordinate Mn(2+). The active-site Phosphoserine intermediate is serine 61. Residues histidine 122, 152 to 153, arginine 183, arginine 189, 258 to 261, and lysine 332 contribute to the substrate site; these read RD and RNDR. Aspartate 399, histidine 403, aspartate 440, histidine 441, and histidine 458 together coordinate Mn(2+).

This sequence belongs to the BPG-independent phosphoglycerate mutase family. Monomer. Requires Mn(2+) as cofactor.

The catalysed reaction is (2R)-2-phosphoglycerate = (2R)-3-phosphoglycerate. The protein operates within carbohydrate degradation; glycolysis; pyruvate from D-glyceraldehyde 3-phosphate: step 3/5. Functionally, catalyzes the interconversion of 2-phosphoglycerate and 3-phosphoglycerate. In Parabacteroides distasonis (strain ATCC 8503 / DSM 20701 / CIP 104284 / JCM 5825 / NCTC 11152), this protein is 2,3-bisphosphoglycerate-independent phosphoglycerate mutase.